The primary structure comprises 419 residues: 3-isopropylmalate dehydratase large subunit (419 aa).

Cys-300, Cys-360, and Cys-363 together coordinate [4Fe-4S] cluster.

It belongs to the aconitase/IPM isomerase family. LeuC type 2 subfamily. As to quaternary structure, heterodimer of LeuC and LeuD. [4Fe-4S] cluster is required as a cofactor.

It carries out the reaction (2R,3S)-3-isopropylmalate = (2S)-2-isopropylmalate. The protein operates within amino-acid biosynthesis; L-leucine biosynthesis; L-leucine from 3-methyl-2-oxobutanoate: step 2/4. Functionally, catalyzes the isomerization between 2-isopropylmalate and 3-isopropylmalate, via the formation of 2-isopropylmaleate. The sequence is that of 3-isopropylmalate dehydratase large subunit from Nitratidesulfovibrio vulgaris (strain ATCC 29579 / DSM 644 / CCUG 34227 / NCIMB 8303 / VKM B-1760 / Hildenborough) (Desulfovibrio vulgaris).